Here is a 278-residue protein sequence, read N- to C-terminus: Small ribosomal subunit protein uS3 (278 aa).

Residues 39–107 form the KH type-2 domain; the sequence is LRKAIAKKYV…KVQLNIVEIS (69 aa). Residues 244-278 are disordered; sequence AKPKRVTKKAEAEASAEEKPKRAAKKAENITKEEE. The span at 251–278 shows a compositional bias: basic and acidic residues; the sequence is KKAEAEASAEEKPKRAAKKAENITKEEE.

The protein belongs to the universal ribosomal protein uS3 family. As to quaternary structure, part of the 30S ribosomal subunit. Forms a tight complex with proteins S10 and S14.

Its function is as follows. Binds the lower part of the 30S subunit head. Binds mRNA in the 70S ribosome, positioning it for translation. The polypeptide is Small ribosomal subunit protein uS3 (Dehalococcoides mccartyi (strain ATCC BAA-2266 / KCTC 15142 / 195) (Dehalococcoides ethenogenes (strain 195))).